Reading from the N-terminus, the 780-residue chain is Pendrin (780 aa).

Residues 1–87 (MAARDRRSEP…YRVKEWLLSD (87 aa)) lie on the Cytoplasmic side of the membrane. Residues 88-108 (IISGVSTGLVGTLQGMAYALL) form a helical membrane-spanning segment. Position 109 (A109) is a topological domain, extracellular. A helical transmembrane segment spans residues 110-130 (AVPVQYGLYSAFFPILTYFVF). Over 131 to 135 (GTSRH) the chain is Cytoplasmic. A helical membrane pass occupies residues 136 to 156 (ISVGPFPVVSLMVGSVVLSMA). At 157 to 191 (PDDHFLVPSGNGSTLNTTTLDTGTRDAARVLLAST) the chain is on the extracellular side. The chain crosses the membrane as a helical span at residues 192 to 212 (LTLLVGIIQLVFGGLQIGFIV). Residues 213-218 (RYLADP) are Cytoplasmic-facing. A helical membrane pass occupies residues 219–239 (LVGGFTTAAAFQVLVSQLKIV). Over 240–263 (LNVSTKNYNGVLSIIYTLIEIFQN) the chain is Extracellular. Residues 264–284 (IGDTNIADFIAGLLTIIVCMA) form a helical membrane-spanning segment. The Cytoplasmic portion of the chain corresponds to 285-295 (VKELNDRFKHK). The chain crosses the membrane as a helical span at residues 296–316 (IPVPIPIEVIVTIIATAISYG). Residues 317 to 344 (ANLEANYNAGIVKSIPSGFLPPVLPSVG) are Extracellular-facing. Residues 345-365 (LFSDMLAASFSIAVVAYAIAV) form a helical membrane-spanning segment. Over 366-384 (SVGKVYATKHDYIIDGNQE) the chain is Cytoplasmic. A helical transmembrane segment spans residues 385 to 405 (FIAFGISNVFSGFFSCFVATT). At 406–421 (ALSRTAVQESTGGKTQ) the chain is on the extracellular side. A helical membrane pass occupies residues 422–442 (VAGLISAVIVMVAIVALGKLL). The Cytoplasmic portion of the chain corresponds to 443 to 448 (EPLQKS). The chain crosses the membrane as a helical span at residues 449 to 469 (VLAAVVIANLKGMFMQVCDVP). Residues 470 to 486 (RLWKQNKTDAVIWVFTC) are Extracellular-facing. The chain crosses the membrane as a helical span at residues 487–507 (IMSIILGLDLGLLAGLLFGLL). Over 508–780 (TVVLRVQFPS…QDEAMRRLAS (273 aa)) the chain is Cytoplasmic. Positions 535–729 (HYKNLEEPEG…LTVHDAILYL (195 aa)) constitute an STAS domain.

The protein belongs to the SLC26A/SulP transporter (TC 2.A.53) family. Highly expressed in the kidney (at protein level).

Its subcellular location is the cell membrane. It is found in the apical cell membrane. The catalysed reaction is chloride(in) = chloride(out). The enzyme catalyses iodide(out) = iodide(in). It carries out the reaction hydrogencarbonate(in) + chloride(out) = hydrogencarbonate(out) + chloride(in). It catalyses the reaction iodide(in) + hydrogencarbonate(out) = iodide(out) + hydrogencarbonate(in). The catalysed reaction is iodide(in) + chloride(out) = iodide(out) + chloride(in). The enzyme catalyses formate(in) + chloride(out) = formate(out) + chloride(in). In terms of biological role, sodium-independent transporter of chloride and iodide. Mediates electroneutral chloride-bicarbonate and chloride-formate exchange with 1:1 stoichiometry. Mediates electroneutral iodide-chloride and iodide-bicarbonate exchange. The polypeptide is Pendrin (Slc26a4) (Rattus norvegicus (Rat)).